A 121-amino-acid chain; its full sequence is NAD(P)H-quinone oxidoreductase subunit 3, chloroplastic (121 aa).

The next 3 helical transmembrane spans lie at 10–30, 65–85, and 90–110; these read FFIF…ISKF, MFAL…PWAM, and LGLS…IGLV.

It belongs to the complex I subunit 3 family. In terms of assembly, NDH is composed of at least 16 different subunits, 5 of which are encoded in the nucleus.

Its subcellular location is the plastid. It localises to the chloroplast thylakoid membrane. The catalysed reaction is a plastoquinone + NADH + (n+1) H(+)(in) = a plastoquinol + NAD(+) + n H(+)(out). It catalyses the reaction a plastoquinone + NADPH + (n+1) H(+)(in) = a plastoquinol + NADP(+) + n H(+)(out). Its function is as follows. NDH shuttles electrons from NAD(P)H:plastoquinone, via FMN and iron-sulfur (Fe-S) centers, to quinones in the photosynthetic chain and possibly in a chloroplast respiratory chain. The immediate electron acceptor for the enzyme in this species is believed to be plastoquinone. Couples the redox reaction to proton translocation, and thus conserves the redox energy in a proton gradient. The polypeptide is NAD(P)H-quinone oxidoreductase subunit 3, chloroplastic (Physcomitrium patens (Spreading-leaved earth moss)).